The chain runs to 703 residues: Protein O-mannosyl-transferase TMEM260 (703 aa).

8 helical membrane-spanning segments follow: residues 20 to 40 (GALRGSVAVFASVAAVFTLTL), 68 to 88 (PLFTLLASLTITLFPFGSVAY), 90 to 110 (VNLLCGLFGAVAASLLFYTVF), 137 to 157 (IAAEVFSLNNLFVGLLMALTV), 182 to 202 (SLCNQHTIVLYILCIIPWILF), 218 to 238 (LTLAFSAGLLPYVYLPVSSYL), 314 to 334 (KSSVVWLFTGMLCLYSLFFAW), and 352 to 372 (FWLQSNAVVAVLAGLGLATLV). Residues Asn403 and Asn564 are each glycosylated (N-linked (GlcNAc...) asparagine).

Belongs to the glycosyltransferase 117 (GT117) family.

The protein localises to the endoplasmic reticulum membrane. The catalysed reaction is a di-trans,poly-cis-dolichyl beta-D-mannosyl phosphate + L-seryl-[protein] = 3-O-(alpha-D-mannosyl)-L-seryl-[protein] + a di-trans,poly-cis-dolichyl phosphate + H(+). It carries out the reaction a di-trans,poly-cis-dolichyl beta-D-mannosyl phosphate + L-threonyl-[protein] = 3-O-(alpha-D-mannosyl)-L-threonyl-[protein] + a di-trans,poly-cis-dolichyl phosphate + H(+). Functionally, O-mannosyl-transferase that transfers mannosyl residues to the hydroxyl group of serine or threonine residues of proteins. Specifically glycosylates the IPT/TIG domain of target proteins, such as MET and MST1R/RON. TMEM260-mediated O-mannosylated residues are composed of single mannose glycans that are not elongated or modified. The sequence is that of Protein O-mannosyl-transferase TMEM260 from Mus musculus (Mouse).